The following is a 404-amino-acid chain: Lissencephaly-1 homolog (404 aa).

Residues 7–39 (QKEEINRAIAEYMQNNGYSESFSVFLKESSLSE) enclose the LisH domain. The stretch at 54–81 (TTVLRLQRKVNDLESKLQESQREINHGA) forms a coiled coil. The segment covering 69-89 (KLQESQREINHGAPTRDKRQA) has biased composition (basic and acidic residues). Positions 69 to 90 (KLQESQREINHGAPTRDKRQAA) are disordered. WD repeat units lie at residues 104 to 145 (GHRL…RTLK), 146 to 185 (GHTDAVNDIAIDAAGKQLVSCSSDLSIKLWDFGQTYDCLK), 189 to 228 (GHEHTVSSVTFLPTGDFVLSASRDHTIKQWDISTGYCVYT), 231 to 270 (GHNDWVRMIRISNDGTLFASASLDQTVTVWSFATKSAKLV), 273 to 327 (DHEH…VLFT), 330 to 369 (AHENWVRGLAFHPKGKYLISVADDKTLRVWELSAQRCMKA), and 372 to 404 (AHEHFVSTVAFHQTSPFVITGSVDMSCKVWECR).

This sequence belongs to the WD repeat LIS1/nudF family. In terms of assembly, component of a dynein-regulating complex composed of at least lis-1 and nud-2. Interacts with nud-2; the interaction is direct. As to expression, expressed in all classes of neurons in the ventral cord. Expressed in the multinucleate spermathecal valves and adult seam cells.

Its subcellular location is the cytoplasm. It localises to the cytoskeleton. The protein resides in the microtubule organizing center. The protein localises to the centrosome. It is found in the chromosome. Its subcellular location is the centromere. It localises to the kinetochore. The protein resides in the nucleus envelope. In terms of biological role, positively regulates the activity of the minus-end directed microtubule motor protein dynein. May enhance dynein-mediated microtubule sliding by targeting dynein to the microtubule plus end. Required for several dynein- and microtubule-dependent processes such as nuclear migration during cell division. Part of a complex with nud-2, which is recruited to the nuclear envelope by unc-83, where, in turn, it recruits dynein to the nuclear surface and regulates nuclear migration in hypodermal precursor cells. Plays a role in GABAergic synaptic vesicle localization in the ventral nerve cord. Required for neuronal cell differentiation. The sequence is that of Lissencephaly-1 homolog from Caenorhabditis elegans.